The following is a 199-amino-acid chain: Photosystem I reaction center subunit XI (199 aa).

A run of 2 helical transmembrane segments spans residues 108–128 (LTAGLLAAIGAVHILTALLVL) and 165–185 (FWLGGCGGSVFAWLLVGTLHL).

The protein belongs to the PsaL family.

The protein localises to the cellular thylakoid membrane. This is Photosystem I reaction center subunit XI from Prochlorococcus marinus (strain AS9601).